Consider the following 938-residue polypeptide: Glutamate receptor 3.1 (938 aa).

The first 20 residues, Met-1–Ser-20, serve as a signal peptide directing secretion. Over Gln-21–Thr-588 the chain is Extracellular. N-linked (GlcNAc...) asparagine glycosylation is found at Asn-22, Asn-39, Asn-59, Asn-340, Asn-418, Asn-436, and Asn-551. The helical transmembrane segment at Ile-589–Leu-609 threads the bilayer. The Cytoplasmic portion of the chain corresponds to Glu-610–Arg-618. A helical membrane pass occupies residues Gly-619–Ala-639. Residues His-640 to Arg-650 lie on the Cytoplasmic side of the membrane. The chain crosses the membrane as a helical span at residues Phe-651 to Leu-671. The Extracellular portion of the chain corresponds to Thr-672–Asp-830. Residues Val-831–Ile-851 traverse the membrane as a helical segment. Over His-852–Cys-938 the chain is Cytoplasmic. The segment at Ala-906 to Cys-938 is disordered. Over residues Ser-922–Cys-938 the composition is skewed to low complexity.

Belongs to the glutamate-gated ion channel (TC 1.A.10.1) family. In terms of assembly, may form homomultimers. As to expression, expressed at low levels in roots and leaves.

Its subcellular location is the membrane. Functionally, glutamate-gated receptor that probably acts as a non-selective cation channel. Involved in root development. May regulate cell proliferation and cell death in the root apex. The protein is Glutamate receptor 3.1 (GLR3.1) of Oryza sativa subsp. japonica (Rice).